We begin with the raw amino-acid sequence, 358 residues long: E3 ubiquitin-protein ligase RNF146 (358 aa).

Residues 36–74 (CAICLQTCVHPVSLPCKHVFCYLCVKGASWLGKRCALCR) form an RING-type zinc finger. Residues K84 and K94 each participate in a glycyl lysine isopeptide (Lys-Gly) (interchain with G-Cter in ubiquitin) cross-link. The 77-residue stretch at 91 to 167 (EELKAASRGN…EHGRRRKIKR (77 aa)) folds into the WWE domain. 3 residues coordinate a glycoprotein: Y107, R110, and W114. Residue K130 forms a Glycyl lysine isopeptide (Lys-Gly) (interchain with G-Cter in ubiquitin) linkage. 4 residues coordinate a glycoprotein: Y144, Q153, R163, and K175. K175 participates in a covalent cross-link: Glycyl lysine isopeptide (Lys-Gly) (interchain with G-Cter in ubiquitin). The interval 253–358 (GDNTAERSHR…PDGQCTVTEV (106 aa)) is disordered. The span at 283 to 297 (SIEETESDASSDSED) shows a compositional bias: acidic residues. Phosphoserine is present on residues S289 and S293. The span at 305 to 322 (HSLTQQRLLVSNANQTVP) shows a compositional bias: polar residues.

Can form homooligomers. Interacts with PARsylated AXIN1, AXIN2, BLZF1, CASC3, H1-2, IPO7, LIG3, NCL, PARP1, XRCC1, XRCC5 and XRCC6. Interacts with DDB1, DHX15, IQGAP1, LRPPRC, PARP2, PRKDC, RUVBL2, TNKS1 and TNKS2. Binding often leads to interactor ubiquitination, in the presence of the appropriate E1 and E2 enzymes, and proteasomal degradation. Post-translationally, ubiquitinated; autoubiquitinated. Autoubiquitination is enhanced upon poly(ADP-ribose)-binding.

The protein resides in the cytoplasm. Its subcellular location is the cytosol. The protein localises to the nucleus. The enzyme catalyses S-ubiquitinyl-[E2 ubiquitin-conjugating enzyme]-L-cysteine + [acceptor protein]-L-lysine = [E2 ubiquitin-conjugating enzyme]-L-cysteine + N(6)-ubiquitinyl-[acceptor protein]-L-lysine.. It functions in the pathway protein modification; protein ubiquitination. Its function is as follows. E3 ubiquitin-protein ligase that specifically binds poly-ADP-ribosylated (PARsylated) proteins and mediates their ubiquitination and subsequent degradation. May regulate many important biological processes, such as cell survival and DNA damage response. Acts as an activator of the Wnt signaling pathway by mediating the ubiquitination of PARsylated AXIN1 and AXIN2, 2 key components of the beta-catenin destruction complex. Acts in cooperation with tankyrase proteins (TNKS and TNKS2), which mediate PARsylation of target proteins AXIN1, AXIN2, BLZF1, CASC3, TNKS and TNKS2. Recognizes and binds tankyrase-dependent PARsylated proteins via its WWE domain and mediates their ubiquitination, leading to their degradation. Different ubiquitin linkage types have been observed: TNKS2 undergoes ubiquitination at 'Lys-48' and 'Lys-63', while AXIN1 is only ubiquitinated at 'Lys-48'. May regulate TNKS and TNKS2 subcellular location, preventing aggregation at a centrosomal location. Neuroprotective protein. Protects the brain against N-methyl-D-aspartate (NMDA) receptor-mediated glutamate excitotoxicity and ischemia, by interfering with PAR-induced cell death, called parthanatos. Prevents nuclear translocation of AIFM1 in a PAR-binding dependent manner. Does not affect PARP1 activation. Protects against cell death induced by DNA damaging agents, such as N-methyl-N-nitro-N-nitrosoguanidine (MNNG) and rescues cells from G1 arrest. Promotes cell survival after gamma-irradiation. Facilitates DNA repair. The polypeptide is E3 ubiquitin-protein ligase RNF146 (RNF146) (Pongo abelii (Sumatran orangutan)).